Consider the following 312-residue polypeptide: Acetyl-coenzyme A carboxylase carboxyl transferase subunit alpha (312 aa).

The 251-residue stretch at 36–286 (ELEKEIEKTF…KTYFLESVKA (251 aa)) folds into the CoA carboxyltransferase C-terminal domain.

It belongs to the AccA family. In terms of assembly, acetyl-CoA carboxylase is a heterohexamer composed of biotin carboxyl carrier protein (AccB), biotin carboxylase (AccC) and two subunits each of ACCase subunit alpha (AccA) and ACCase subunit beta (AccD).

The protein resides in the cytoplasm. The catalysed reaction is N(6)-carboxybiotinyl-L-lysyl-[protein] + acetyl-CoA = N(6)-biotinyl-L-lysyl-[protein] + malonyl-CoA. It participates in lipid metabolism; malonyl-CoA biosynthesis; malonyl-CoA from acetyl-CoA: step 1/1. Functionally, component of the acetyl coenzyme A carboxylase (ACC) complex. First, biotin carboxylase catalyzes the carboxylation of biotin on its carrier protein (BCCP) and then the CO(2) group is transferred by the carboxyltransferase to acetyl-CoA to form malonyl-CoA. This Sulfurovum sp. (strain NBC37-1) protein is Acetyl-coenzyme A carboxylase carboxyl transferase subunit alpha.